A 248-amino-acid polypeptide reads, in one-letter code: Probable transcriptional regulatory protein Mrad2831_3553 (248 aa).

The protein belongs to the TACO1 family.

The protein localises to the cytoplasm. The protein is Probable transcriptional regulatory protein Mrad2831_3553 of Methylobacterium radiotolerans (strain ATCC 27329 / DSM 1819 / JCM 2831 / NBRC 15690 / NCIMB 10815 / 0-1).